The sequence spans 131 residues: Transcription antitermination protein NusB (131 aa).

It belongs to the NusB family.

In terms of biological role, involved in transcription antitermination. Required for transcription of ribosomal RNA (rRNA) genes. Binds specifically to the boxA antiterminator sequence of the ribosomal RNA (rrn) operons. This chain is Transcription antitermination protein NusB, found in Caldicellulosiruptor saccharolyticus (strain ATCC 43494 / DSM 8903 / Tp8T 6331).